The chain runs to 221 residues: Ribosomal RNA small subunit methyltransferase Nep1 (221 aa).

S-adenosyl-L-methionine-binding positions include glycine 174, glycine 179, and 196–201; that span reads LGEVAM.

This sequence belongs to the class IV-like SAM-binding methyltransferase superfamily. RNA methyltransferase NEP1 family. Homodimer.

It carries out the reaction a pseudouridine in rRNA + S-adenosyl-L-methionine = an N(1)-methylpseudouridine in rRNA + S-adenosyl-L-homocysteine + H(+). Its function is as follows. Methyltransferase involved in ribosomal biogenesis. Specifically catalyzes the N1-methylation of the pseudouridine corresponding to position 914 in M.jannaschii 16S rRNA. This chain is Ribosomal RNA small subunit methyltransferase Nep1, found in Pyrobaculum arsenaticum (strain DSM 13514 / JCM 11321 / PZ6).